The chain runs to 449 residues: uncharacterized protein (449 aa).

Serine 420 is modified (phosphoserine).

Belongs to the NAD kinase family.

The protein resides in the cytoplasm. The protein localises to the nucleus. This is an uncharacterized protein from Schizosaccharomyces pombe (strain 972 / ATCC 24843) (Fission yeast).